We begin with the raw amino-acid sequence, 344 residues long: Dihydroorotase (344 aa).

Positions 13 and 15 each coordinate Zn(2+). Substrate contacts are provided by residues histidine 15–arginine 17 and asparagine 41. Zn(2+) is bound by residues lysine 99, histidine 136, and histidine 174. Lysine 99 is modified (N6-carboxylysine). Histidine 136 is a substrate binding site. Leucine 219 is a substrate binding site. Residue aspartate 247 participates in Zn(2+) binding. The active site involves aspartate 247. 2 residues coordinate substrate: histidine 251 and alanine 263.

It belongs to the metallo-dependent hydrolases superfamily. DHOase family. Class II DHOase subfamily. Homodimer. Requires Zn(2+) as cofactor.

The catalysed reaction is (S)-dihydroorotate + H2O = N-carbamoyl-L-aspartate + H(+). It participates in pyrimidine metabolism; UMP biosynthesis via de novo pathway; (S)-dihydroorotate from bicarbonate: step 3/3. In terms of biological role, catalyzes the reversible cyclization of carbamoyl aspartate to dihydroorotate. In Acinetobacter baumannii (strain SDF), this protein is Dihydroorotase.